The chain runs to 1201 residues: Coatomer subunit alpha (1201 aa).

WD repeat units lie at residues 9 to 39 (SKST…QLWD), 51 to 81 (DHEG…KVWS), 93 to 123 (GHLD…RIWN), 135 to 165 (GHNH…RIWD), 207 to 237 (GHTR…KLWR), and 251 to 281 (GHTN…RVWD). A disordered region spans residues 842–862 (AVNTTQEQEEPLGEENFNDED). The span at 848–862 (EQEEPLGEENFNDED) shows a compositional bias: acidic residues.

In terms of assembly, oligomeric complex that consists of at least the alpha, beta, beta', gamma, delta, epsilon and zeta subunits. Interacts with the ESCRT-0 subunit VPS27. Interacts with KEI1 (via C-terminal region).

The protein resides in the cytoplasm. Its subcellular location is the golgi apparatus membrane. It localises to the cytoplasmic vesicle. It is found in the COPI-coated vesicle membrane. In terms of biological role, the coatomer is a cytosolic protein complex that binds to dilysine motifs and reversibly associates with Golgi non-clathrin-coated vesicles, which further mediate biosynthetic protein transport from the ER, via the Golgi up to the trans Golgi network. Coatomer complex is required for budding from Golgi membranes, and is essential for the retrograde Golgi-to-ER transport of dilysine-tagged proteins. The polypeptide is Coatomer subunit alpha (COP1) (Saccharomyces cerevisiae (strain ATCC 204508 / S288c) (Baker's yeast)).